The chain runs to 241 residues: Uridylate kinase (241 aa).

15–18 (KLSG) contacts ATP. Residues 23-28 (GAEGFG) form an involved in allosteric activation by GTP region. Glycine 57 contacts UMP. 2 residues coordinate ATP: glycine 58 and arginine 62. Residues aspartate 77 and 138–145 (TGNPFFTT) contribute to the UMP site. ATP-binding residues include threonine 165, phenylalanine 171, and aspartate 174.

This sequence belongs to the UMP kinase family. In terms of assembly, homohexamer.

It localises to the cytoplasm. The catalysed reaction is UMP + ATP = UDP + ADP. The protein operates within pyrimidine metabolism; CTP biosynthesis via de novo pathway; UDP from UMP (UMPK route): step 1/1. Allosterically activated by GTP. Inhibited by UTP. Catalyzes the reversible phosphorylation of UMP to UDP. This is Uridylate kinase from Sodalis glossinidius (strain morsitans).